The sequence spans 297 residues: Protein COFACTOR ASSEMBLY OF COMPLEX C SUBUNIT B CCB4, chloroplastic (297 aa).

The transit peptide at 1–33 (MEARIILLRIQIPWSANRQFSHPPLDFPRFIRA) directs the protein to the chloroplast. Residues 34 to 70 (SSSSTSQKPKTYEGPKPRKNLVADFISKNDDLVRSLP) lie on the Stromal side of the membrane. A helical transmembrane segment spans residues 71–91 (IYVGGASLLAVLFNRTVSGIA). The Lumenal portion of the chain corresponds to 92-103 (PVADASSSQSRA). Residues 104–124 (DLLALGLAVTNLLTGLVWLSI) traverse the membrane as a helical segment. Residues 125–297 (RPKSITPVNP…DSDEISRVTV (173 aa)) are Stromal-facing.

It is found in the plastid. It localises to the chloroplast thylakoid membrane. Required for the biogenesis and accumulation of native cytochrome b6 in the thylakoid membrane. Controls the conversion of apocytochrome b6 to holocytochrome b6. Required for covalent binding of the c-type heme to cytochrome b6. In Arabidopsis thaliana (Mouse-ear cress), this protein is Protein COFACTOR ASSEMBLY OF COMPLEX C SUBUNIT B CCB4, chloroplastic.